We begin with the raw amino-acid sequence, 219 residues long: Izumo sperm-egg fusion protein 4 (219 aa).

The N-terminal stretch at 1 to 15 (MALLLCLVGVTAALA) is a signal peptide. N206 carries N-linked (GlcNAc...) asparagine glycosylation.

It belongs to the Izumo family.

It is found in the secreted. This chain is Izumo sperm-egg fusion protein 4 (IZUMO4), found in Macaca fascicularis (Crab-eating macaque).